Consider the following 100-residue polypeptide: NADH-quinone oxidoreductase subunit K 1 (100 aa).

3 helical membrane passes run 3–23 (IIKA…LGVI), 28–48 (LITV…ALVA), and 60–80 (IFAF…LGLI).

This sequence belongs to the complex I subunit 4L family. NDH-1 is composed of 14 different subunits. Subunits NuoA, H, J, K, L, M, N constitute the membrane sector of the complex.

The protein localises to the cell inner membrane. The catalysed reaction is a quinone + NADH + 5 H(+)(in) = a quinol + NAD(+) + 4 H(+)(out). Functionally, NDH-1 shuttles electrons from NADH, via FMN and iron-sulfur (Fe-S) centers, to quinones in the respiratory chain. The immediate electron acceptor for the enzyme in this species is believed to be ubiquinone. Couples the redox reaction to proton translocation (for every two electrons transferred, four hydrogen ions are translocated across the cytoplasmic membrane), and thus conserves the redox energy in a proton gradient. The sequence is that of NADH-quinone oxidoreductase subunit K 1 from Aquifex aeolicus (strain VF5).